Consider the following 721-residue polypeptide: Polyribonucleotide nucleotidyltransferase (721 aa).

Positions 485 and 491 each coordinate Mg(2+). The 60-residue stretch at 552-611 (PKIYIVKIHPDKIREIIGPGGKVIRELQAMSNTRIEVDDSGTVKIAASTEEEARIAIKAV) folds into the KH domain. The 69-residue stretch at 621–689 (GEIYEGEVVR…PEGKIRLSRK (69 aa)) folds into the S1 motif domain. Residues 687–721 (SRKALLPAPEKGEEDEKSAPRSRRPGGNSDRRNNR) are disordered.

This sequence belongs to the polyribonucleotide nucleotidyltransferase family. Mg(2+) serves as cofactor.

Its subcellular location is the cytoplasm. The catalysed reaction is RNA(n+1) + phosphate = RNA(n) + a ribonucleoside 5'-diphosphate. In terms of biological role, involved in mRNA degradation. Catalyzes the phosphorolysis of single-stranded polyribonucleotides processively in the 3'- to 5'-direction. This Desulfosudis oleivorans (strain DSM 6200 / JCM 39069 / Hxd3) (Desulfococcus oleovorans) protein is Polyribonucleotide nucleotidyltransferase.